A 121-amino-acid chain; its full sequence is MYIYWILLGLAIATEITGTLSMKWASVSEGNGGFILMLVMISLSYIFLSFAVKKIALGVAYALWEGIGILFITLFSVLLFDESLSLMKIAGLTTLVAGIVLIKSGTRKVRKPELEVNHGAV.

4 helical membrane-spanning segments follow: residues 1–21 (MYIY…GTLS), 32–52 (GGFI…SFAV), 55–75 (IALG…ITLF), and 82–102 (ESLS…IVLI).

The protein belongs to the drug/metabolite transporter (DMT) superfamily. Small multidrug resistance (SMR) (TC 2.A.7.1) family. MdtJ subfamily. In terms of assembly, forms a complex with MdtI.

The protein resides in the cell inner membrane. Catalyzes the excretion of spermidine. This Escherichia coli O127:H6 (strain E2348/69 / EPEC) protein is Spermidine export protein MdtJ.